Here is a 134-residue protein sequence, read N- to C-terminus: MSKPKHPRTLAETEAQALTRNIRVSPRKLNLVAGLIRNKPASQAVAILTFSKRRIAQDVRKTLESAIANAENNHQLDVDQLVVVRAEVGKSIVMRRFHARGRGRSSRIEKFFSHLKIVVAERAAEAETTEQKAA.

The protein belongs to the universal ribosomal protein uL22 family. In terms of assembly, part of the 50S ribosomal subunit.

This protein binds specifically to 23S rRNA; its binding is stimulated by other ribosomal proteins, e.g. L4, L17, and L20. It is important during the early stages of 50S assembly. It makes multiple contacts with different domains of the 23S rRNA in the assembled 50S subunit and ribosome. Functionally, the globular domain of the protein is located near the polypeptide exit tunnel on the outside of the subunit, while an extended beta-hairpin is found that lines the wall of the exit tunnel in the center of the 70S ribosome. This chain is Large ribosomal subunit protein uL22, found in Gluconacetobacter diazotrophicus (strain ATCC 49037 / DSM 5601 / CCUG 37298 / CIP 103539 / LMG 7603 / PAl5).